Reading from the N-terminus, the 100-residue chain is NADH-quinone oxidoreductase subunit K (100 aa).

A run of 3 helical transmembrane segments spans residues 4-24, 28-48, and 60-80; these read YEYYVALSGLLMVLGFIGVIV, IIAMLISTELMLNAVNVAFVA, and VFVFFILTIAAAEAAIGLGLI.

It belongs to the complex I subunit 4L family. NDH-1 is composed of 14 different subunits. Subunits NuoA, H, J, K, L, M, N constitute the membrane sector of the complex.

The protein resides in the cell inner membrane. The catalysed reaction is a quinone + NADH + 5 H(+)(in) = a quinol + NAD(+) + 4 H(+)(out). Its function is as follows. NDH-1 shuttles electrons from NADH, via FMN and iron-sulfur (Fe-S) centers, to quinones in the respiratory chain. The immediate electron acceptor for the enzyme in this species is believed to be ubiquinone. Couples the redox reaction to proton translocation (for every two electrons transferred, four hydrogen ions are translocated across the cytoplasmic membrane), and thus conserves the redox energy in a proton gradient. This Sulfurihydrogenibium azorense (strain DSM 15241 / OCM 825 / Az-Fu1) protein is NADH-quinone oxidoreductase subunit K.